The chain runs to 195 residues: Protein GrpE (195 aa).

Residues 1–18 (MDPKEKKTKQEEELKVDD) show a composition bias toward basic and acidic residues. Residues 1 to 41 (MDPKEKKTKQEEELKVDDIQDTVEGQSQNEEATEATEPLTA) form a disordered region.

The protein belongs to the GrpE family. As to quaternary structure, homodimer.

It localises to the cytoplasm. In terms of biological role, participates actively in the response to hyperosmotic and heat shock by preventing the aggregation of stress-denatured proteins, in association with DnaK and GrpE. It is the nucleotide exchange factor for DnaK and may function as a thermosensor. Unfolded proteins bind initially to DnaJ; upon interaction with the DnaJ-bound protein, DnaK hydrolyzes its bound ATP, resulting in the formation of a stable complex. GrpE releases ADP from DnaK; ATP binding to DnaK triggers the release of the substrate protein, thus completing the reaction cycle. Several rounds of ATP-dependent interactions between DnaJ, DnaK and GrpE are required for fully efficient folding. In Bacteroides fragilis (strain ATCC 25285 / DSM 2151 / CCUG 4856 / JCM 11019 / LMG 10263 / NCTC 9343 / Onslow / VPI 2553 / EN-2), this protein is Protein GrpE.